The sequence spans 183 residues: Adenine phosphoribosyltransferase (183 aa).

This sequence belongs to the purine/pyrimidine phosphoribosyltransferase family. As to quaternary structure, homodimer.

Its subcellular location is the cytoplasm. The enzyme catalyses AMP + diphosphate = 5-phospho-alpha-D-ribose 1-diphosphate + adenine. Its pathway is purine metabolism; AMP biosynthesis via salvage pathway; AMP from adenine: step 1/1. Functionally, catalyzes a salvage reaction resulting in the formation of AMP, that is energically less costly than de novo synthesis. This is Adenine phosphoribosyltransferase from Shewanella sp. (strain MR-7).